Consider the following 93-residue polypeptide: Alpha-defensin 24 (93 aa).

The N-terminal stretch at 1 to 19 is a signal peptide; it reads MKTLILLSALVLLAFQVQA. A propeptide spanning residues 20-58 is cleaved from the precursor; sequence DPIQNTDEETKTEEQPGEEDQAVSVSFGDPEGASLQEES. A disordered region spans residues 23–54; it reads QNTDEETKTEEQPGEEDQAVSVSFGDPEGASL. 3 cysteine pairs are disulfide-bonded: Cys64–Cys92, Cys66–Cys81, and Cys71–Cys91.

This sequence belongs to the alpha-defensin family.

It localises to the secreted. May have microbicidal activities. The sequence is that of Alpha-defensin 24 (Defa24) from Mus musculus (Mouse).